A 1403-amino-acid polypeptide reads, in one-letter code: MDYNVKDFGALGDGVSDDTAAIQAAIDAAHAAGGGTVYLPAGEYRVSGGEEPSDGCLTIKSNVHIVGAGMGETVIKMVDGWTQNVTGMVRSAYGEETSNFGMSDLTLDGNRDNLSAKVDGWFNGYIPGQDGADRDVTLERVEIREMSGYGFDPHEQTINLTIRDSVAHDNSLDGFVADYQVGGVFENNVSYNNDRHGFNIVTSTNDFVLSNNVAYGNGGAGLVVQRGSYDLPHPYDILIDGGAYYDNALEGVQLKMAHDVTLQNAEIYGNGLYGVRVYGAQDVQILDNQIHDNSQNGAYAEVLLQSYDDTAGVSGNFYVTTGTWLEGNVISGSANSTYGIQERADGTDYSSLYANSIDGVQTGAVRLYGANSTVSSQSGSGQQATLEGSAGNDALSGTEAHETLLGQAGDDRLNGDAGNDILDGGAGRDNLTGGAGADTFRFSARTDSYRTDSASFNDLITDFDADEDSIDLSALGFTGLGDGYNGTLLLKTNAEGTRTYLKSYEADAQGRRFEIALDGNFTGLFNDNNLLFDAAPATGTEGSDNLLGTDAGETLLGYGGNDTLNGGAGDDILVGGAGRDSLTGGAGADVFRFDALSDSQRNYTTGDNQADRILDFDPTLDRIDVSALGFTGLGNGRNGTLAVVLNSAGDRTDLKSYDTDANGYSFELSLAGNYQGQLSAEQFVFATSQGGQMTIIEGTDGNDTLQGTEANERLLGLDGRDNLNGGAGDDILDGGAGRDTLTGGTGADTFLFSTRTDSYRTDSASFNDLITDFDPTQDRIDLSGLGFSGFGNGYDGTLLLQVNAAGTRTYLKSFEADANGQRFEIALDGDFSGQLDSGNVIFEPAVFNAKDFGALGDGASDDRPAIQAAIDAAYAAGGGTVYLPAGEYRVSPTGEPGDGCLMLKDGVYLAGDGIGETVIKLIDGSDQKITGMVRSAYGEETSNFGMSDLTLDGNRDNTSGKVDGWFNGYIPGQDGADRNVTIERVEIREMSGYGFDPHEQTINLTIRDSVAHDNGLDGFVADYLVDSVFENNVAYNNDRHGFNIVTSTYDFVMTNNVAYGNGGAGLTIQRGSEDLAQPTDILIDGGAYYDNALEGVLFKMTNNVTLQNAEIYGNGSSGVRLYGTEDVQILDNQIHDNSQNGTYPEVLLQAFDDSQVTGELYETLNTRIEGNLIDASDNANYAVRERDDGSDYTTLVDNDISGGQVASVQLSGAHSSLSGGTVEVPQGTDGNDVLVGSDANDQLYGGAGDDRLDGGAGDDLLDGGAGRDDLTGGTGADTFVFAARTDSYRTDAGVFNDLILDFDASEDRIDLSALGFSGFGDGYNGTLLVQLSSAGTRTYLKSYEEDLEGRRFEVALDGDHTGDLSAANVVFADDGSAAVASSDPAATQLEVVGSSGTQTDQLA.

PbH1 repeat units lie at residues 133–155, 157–179, 180–202, 204–226, 257–279, 280–302, and 320–359; these read DRDV…DPHE, TINL…VADY, QVGG…NIVT, TNDF…VVQR, AHDV…RVYG, AQDV…YAEV, and TTGT…SIDG. Disordered regions lie at residues 372–395 and 408–428; these read STVS…NDAL and AGDD…GAGR. Hemolysin-type calcium-binding repeat units follow at residues 388-403, 406-422, 424-440, 557-573, 574-591, 697-712, 716-732, and 734-750; these read GSAG…AHET, GQAG…NDIL, GGAG…ADTF, GYGG…DDIL, VGGA…ADVF, EGTD…EANE, and GLDG…DDIL. PbH1 repeat units lie at residues 977 to 999, 1001 to 1023, 1024 to 1046, 1048 to 1070, 1101 to 1123, 1124 to 1146, 1163 to 1185, and 1190 to 1212; these read DRNV…DPHE, TINL…VADY, LVDS…NIVT, TYDF…TIQR, TNNV…RLYG, TEDV…YPEV, TLNT…AVRE, and SDYT…QLSG. Hemolysin-type calcium-binding repeat units lie at residues 1227–1243, 1244–1261, and 1263–1279; these read GTDG…NDQL, YGGA…DDLL, and GGAG…ADTF.

It belongs to the D-mannuronate C5-epimerase family. The cofactor is Ca(2+).

The protein resides in the secreted. The catalysed reaction is [(1-&gt;4)-beta-D-mannuronosyl](n) = [alginate](n). It participates in glycan biosynthesis; alginate biosynthesis. Its activity is regulated as follows. Inhibited by zinc. In terms of biological role, converts beta-D-mannuronic acid (M) to alpha-L-guluronic acid (G), producing a polymer with gel-forming capacity, required for the formation of the cyst coat. This Azotobacter vinelandii protein is Mannuronan C5-epimerase AlgE1.